A 233-amino-acid chain; its full sequence is Fibroblast growth factor 8 (233 aa).

Residues 1–22 form the signal peptide; that stretch reads MGSPRSALSCLLLHLLVLCLQA. Asn-155 is a glycosylation site (N-linked (GlcNAc...) asparagine).

The protein belongs to the heparin-binding growth factors family. Monomer. Homodimer. Interacts with FGFR1, FGFR2, FGFR3 and FGFR4. Affinity between fibroblast growth factors (FGFs) and their receptors is increased by heparan sulfate glycosaminoglycans that function as coreceptors.

The protein resides in the secreted. Plays an important role in the regulation of embryonic development, cell proliferation, cell differentiation and cell migration. Required for normal brain, eye, ear and limb development during embryogenesis. Required for normal development of the gonadotropin-releasing hormone (GnRH) neuronal system. Plays a role in neurite outgrowth in hippocampal cells. This chain is Fibroblast growth factor 8 (FGF8), found in Homo sapiens (Human).